The sequence spans 420 residues: Enolase (420 aa).

A (2R)-2-phosphoglycerate-binding site is contributed by Q162. Catalysis depends on E206, which acts as the Proton donor. 3 residues coordinate Mg(2+): D241, E282, and D308. (2R)-2-phosphoglycerate-binding residues include K333, R362, S363, and K384. The Proton acceptor role is filled by K333.

The protein belongs to the enolase family. Mg(2+) is required as a cofactor.

The protein localises to the cytoplasm. It localises to the secreted. The protein resides in the cell surface. It catalyses the reaction (2R)-2-phosphoglycerate = phosphoenolpyruvate + H2O. It functions in the pathway carbohydrate degradation; glycolysis; pyruvate from D-glyceraldehyde 3-phosphate: step 4/5. Functionally, catalyzes the reversible conversion of 2-phosphoglycerate (2-PG) into phosphoenolpyruvate (PEP). It is essential for the degradation of carbohydrates via glycolysis. The polypeptide is Enolase (Methanothrix thermoacetophila (strain DSM 6194 / JCM 14653 / NBRC 101360 / PT) (Methanosaeta thermophila)).